The chain runs to 308 residues: D-alanine--D-alanine ligase (308 aa).

Residues 102-302 (KKVAAAAGIP…FGDLVSWMVE (201 aa)) enclose the ATP-grasp domain. ATP is bound at residue 128–183 (PLQPPYVVKPVREGSSFGVVIVKEDQSHPPQILTSSEWPFGNQVMVERYIHGRELT). Residues aspartate 252, glutamate 269, and asparagine 271 each contribute to the Mg(2+) site.

Belongs to the D-alanine--D-alanine ligase family. Mg(2+) serves as cofactor. It depends on Mn(2+) as a cofactor.

Its subcellular location is the cytoplasm. It carries out the reaction 2 D-alanine + ATP = D-alanyl-D-alanine + ADP + phosphate + H(+). The protein operates within cell wall biogenesis; peptidoglycan biosynthesis. Functionally, cell wall formation. In Agrobacterium fabrum (strain C58 / ATCC 33970) (Agrobacterium tumefaciens (strain C58)), this protein is D-alanine--D-alanine ligase.